Reading from the N-terminus, the 487-residue chain is Serine/threonine-protein kinase 4 (487 aa).

N-acetylmethionine is present on methionine 1. Threonine 3 bears the Phosphothreonine mark. The 252-residue stretch at 30–281 folds into the Protein kinase domain; that stretch reads FDVLEKLGEG…ATQLLQHPFV (252 aa). ATP-binding positions include 36-44 and lysine 59; that span reads LGEGSYGSV. The active-site Proton acceptor is aspartate 149. A Phosphothreonine; by autocatalysis modification is found at threonine 183. Residue serine 265 is modified to Phosphoserine. The stretch at 290–310 forms a coiled coil; the sequence is LRDLINEAMDVKLKRQESQQR. A compositionally biased stretch (basic and acidic residues) spans 303–312; sequence KRQESQQREV. A disordered region spans residues 303–332; sequence KRQESQQREVDQDDEENSEEDEMDSGTMVR. Residues 313–326 show a composition bias toward acidic residues; it reads DQDDEENSEEDEMD. Serine 320 is modified (phosphoserine). 2 positions are modified to phosphothreonine: threonine 340 and threonine 367. Threonine 387 is modified (phosphothreonine; by PKB/AKT1). Phosphoserine occurs at positions 410 and 414. Tyrosine 433 is modified (phosphotyrosine). Residues 433–480 enclose the SARAH domain; that stretch reads YEFLKSWTVEDLQKRLLALDPMMEQEIEEIRQKYQSKRQPILDAIEAK.

It belongs to the protein kinase superfamily. STE Ser/Thr protein kinase family. STE20 subfamily. In terms of assembly, homodimer; mediated via the coiled-coil region. Interacts with NORE1, which inhibits autoactivation. Interacts with and stabilizes SAV1. Interacts with RASSF1. Interacts with FOXO3. Interacts with RASSF2 (via SARAH domain). Interacts with AR, PKB/AKT1, TNNI3 and SIRT1. Interacts with DLG5 (via PDZ domain 3). Interacts with MARK3 and SCRIB in the presence of DLG5. The cofactor is Mg(2+). Autophosphorylated on serine and threonine residues. Phosphorylation at Thr-387 by PKB/AKT1, leads to inhibition of its: kinase activity, nuclear translocation and autophosphorylation at Thr-183. It also diminishes its cleavage by caspases and its ability to phosphorylate FOXO3. Post-translationally, proteolytically cleaved by caspase-3 during apoptosis at Asp-326 and Asp-349 resulting in a 37 kDa or a 39 kDa subunit respectively. The 39 kDa subunit is further cleaved into the 37 kDa form. Proteolytic cleavage results in kinase activation and nuclear translocation of the truncated form (MST1/N). It is less likely that cleavage at Asp-349 is a prerequisite for activation as this site is not conserved in the murine ortholog.

It is found in the cytoplasm. The protein localises to the nucleus. The enzyme catalyses L-seryl-[protein] + ATP = O-phospho-L-seryl-[protein] + ADP + H(+). It carries out the reaction L-threonyl-[protein] + ATP = O-phospho-L-threonyl-[protein] + ADP + H(+). Inhibited by the C-terminal non-catalytic region. Activated by caspase-cleavage. Full activation also requires homodimerization and autophosphorylation of Thr-183. Activated by RASSF1 which acts by preventing its dephosphorylation. Functionally, stress-activated, pro-apoptotic kinase which, following caspase-cleavage, enters the nucleus and induces chromatin condensation followed by internucleosomal DNA fragmentation. Key component of the Hippo signaling pathway which plays a pivotal role in organ size control and tumor suppression by restricting proliferation and promoting apoptosis. The core of this pathway is composed of a kinase cascade wherein STK3/MST2 and STK4/MST1, in complex with its regulatory protein SAV1, phosphorylates and activates LATS1/2 in complex with its regulatory protein MOB1, which in turn phosphorylates and inactivates YAP1 oncoprotein and WWTR1/TAZ. Phosphorylation of YAP1 by LATS2 inhibits its translocation into the nucleus to regulate cellular genes important for cell proliferation, cell death, and cell migration. STK3/MST2 and STK4/MST1 are required to repress proliferation of mature hepatocytes, to prevent activation of facultative adult liver stem cells (oval cells), and to inhibit tumor formation. Phosphorylates 'Ser-14' of histone H2B (H2BS14ph) during apoptosis. Phosphorylates FOXO3 upon oxidative stress, which results in its nuclear translocation and cell death initiation. Phosphorylates MOBKL1A, MOBKL1B and RASSF2. Phosphorylates TNNI3 (cardiac Tn-I) and alters its binding affinity to TNNC1 (cardiac Tn-C) and TNNT2 (cardiac Tn-T). Phosphorylates FOXO1 on 'Ser-212' and regulates its activation and stimulates transcription of PMAIP1 in a FOXO1-dependent manner. Phosphorylates SIRT1 and inhibits SIRT1-mediated p53/TP53 deacetylation, thereby promoting p53/TP53 dependent transcription and apoptosis upon DNA damage. Acts as an inhibitor of PKB/AKT1. Phosphorylates AR on 'Ser-650' and suppresses its activity by intersecting with PKB/AKT1 signaling and antagonizing formation of AR-chromatin complexes. The polypeptide is Serine/threonine-protein kinase 4 (STK4) (Macaca mulatta (Rhesus macaque)).